Here is a 621-residue protein sequence, read N- to C-terminus: Zinc metalloproteinase-disintegrin-like NaMP (621 aa).

Residues Met1–Ser20 form the signal peptide. Positions Thr21–Ile188 are excised as a propeptide. The 197-residue stretch at Lys206–Pro402 folds into the Peptidase M12B domain. 3 N-linked (GlcNAc...) asparagine glycosylation sites follow: Asn225, Asn268, and Asn319. Disulfide bonds link Cys317-Cys397, Cys357-Cys381, Cys359-Cys364, Cys413-Cys442, Cys424-Cys437, Cys426-Cys432, Cys436-Cys459, Cys450-Cys456, Cys455-Cys481, Cys468-Cys488, Cys475-Cys507, Cys500-Cys512, Cys519-Cys569, Cys534-Cys579, Cys547-Cys557, Cys564-Cys605, and Cys599-Cys610. His342 is a Zn(2+) binding site. The active site involves Glu343. His346 and His352 together coordinate Zn(2+). A Disintegrin domain is found at Thr410–Asn496. Residues Asp474 to Asp476 carry the D/ECD-tripeptide motif. N-linked (GlcNAc...) asparagine glycosylation occurs at Asn551.

It belongs to the venom metalloproteinase (M12B) family. P-III subfamily. P-IIIa sub-subfamily. As to quaternary structure, monomer. Zn(2+) is required as a cofactor. In terms of tissue distribution, expressed by the venom gland.

The protein localises to the secreted. In terms of biological role, snake venom zinc metalloproteinase that inhibits platelet aggregation and degrades fibrinogen. This is Zinc metalloproteinase-disintegrin-like NaMP from Naja atra (Chinese cobra).